A 153-amino-acid polypeptide reads, in one-letter code: Ribonuclease P protein component (153 aa).

It belongs to the RnpA family. In terms of assembly, consists of a catalytic RNA component (M1 or rnpB) and a protein subunit.

The catalysed reaction is Endonucleolytic cleavage of RNA, removing 5'-extranucleotides from tRNA precursor.. Functionally, RNaseP catalyzes the removal of the 5'-leader sequence from pre-tRNA to produce the mature 5'-terminus. It can also cleave other RNA substrates such as 4.5S RNA. The protein component plays an auxiliary but essential role in vivo by binding to the 5'-leader sequence and broadening the substrate specificity of the ribozyme. The sequence is that of Ribonuclease P protein component from Helicobacter acinonychis (strain Sheeba).